A 252-amino-acid polypeptide reads, in one-letter code: Small ribosomal subunit protein eS1A (252 aa).

The residue at position 2 (Ala-2) is an N-acetylalanine; partial.

This sequence belongs to the eukaryotic ribosomal protein eS1 family. Component of the small ribosomal subunit (SSU). Mature yeast ribosomes consist of a small (40S) and a large (60S) subunit. The 40S small subunit contains 1 molecule of ribosomal RNA (18S rRNA) and at least 33 different proteins. The large 60S subunit contains 3 rRNA molecules (25S, 5.8S and 5S rRNA) and at least 46 different proteins. eS1 interacts directly with uS11 and eS26, which form part of the mRNA exit tunnel.

It localises to the cytoplasm. Its function is as follows. Component of the ribosome, a large ribonucleoprotein complex responsible for the synthesis of proteins in the cell. The small ribosomal subunit (SSU) binds messenger RNAs (mRNAs) and translates the encoded message by selecting cognate aminoacyl-transfer RNA (tRNA) molecules. The large subunit (LSU) contains the ribosomal catalytic site termed the peptidyl transferase center (PTC), which catalyzes the formation of peptide bonds, thereby polymerizing the amino acids delivered by tRNAs into a polypeptide chain. The nascent polypeptides leave the ribosome through a tunnel in the LSU and interact with protein factors that function in enzymatic processing, targeting, and the membrane insertion of nascent chains at the exit of the ribosomal tunnel. This is Small ribosomal subunit protein eS1A (rps101) from Schizosaccharomyces pombe (strain 972 / ATCC 24843) (Fission yeast).